A 111-amino-acid polypeptide reads, in one-letter code: Large ribosomal subunit protein uL22 (111 aa).

The protein belongs to the universal ribosomal protein uL22 family. As to quaternary structure, part of the 50S ribosomal subunit.

Its function is as follows. This protein binds specifically to 23S rRNA; its binding is stimulated by other ribosomal proteins, e.g. L4, L17, and L20. It is important during the early stages of 50S assembly. It makes multiple contacts with different domains of the 23S rRNA in the assembled 50S subunit and ribosome. The globular domain of the protein is located near the polypeptide exit tunnel on the outside of the subunit, while an extended beta-hairpin is found that lines the wall of the exit tunnel in the center of the 70S ribosome. In Wigglesworthia glossinidia brevipalpis, this protein is Large ribosomal subunit protein uL22.